Consider the following 753-residue polypeptide: 5-methyltetrahydropteroyltriglutamate--homocysteine methyltransferase (753 aa).

5-methyltetrahydropteroyltri-L-glutamate is bound by residues arginine 17–lysine 20 and lysine 117. L-homocysteine-binding positions include isoleucine 431 to serine 433 and glutamate 484. Residues isoleucine 431–serine 433 and glutamate 484 each bind L-methionine. Residues arginine 515–cysteine 516 and tryptophan 561 contribute to the 5-methyltetrahydropteroyltri-L-glutamate site. An L-homocysteine-binding site is contributed by aspartate 599. Aspartate 599 serves as a coordination point for L-methionine. A 5-methyltetrahydropteroyltri-L-glutamate-binding site is contributed by glutamate 605. Histidine 641, cysteine 643, and glutamate 665 together coordinate Zn(2+). Histidine 694 serves as the catalytic Proton donor. Cysteine 726 is a binding site for Zn(2+).

This sequence belongs to the vitamin-B12 independent methionine synthase family. It depends on Zn(2+) as a cofactor.

The enzyme catalyses 5-methyltetrahydropteroyltri-L-glutamate + L-homocysteine = tetrahydropteroyltri-L-glutamate + L-methionine. It functions in the pathway amino-acid biosynthesis; L-methionine biosynthesis via de novo pathway; L-methionine from L-homocysteine (MetE route): step 1/1. In terms of biological role, catalyzes the transfer of a methyl group from 5-methyltetrahydrofolate to homocysteine resulting in methionine formation. The sequence is that of 5-methyltetrahydropteroyltriglutamate--homocysteine methyltransferase from Shigella flexneri serotype 5b (strain 8401).